Here is a 147-residue protein sequence, read N- to C-terminus: Large ribosomal subunit protein uL11 (147 aa).

The protein belongs to the universal ribosomal protein uL11 family. As to quaternary structure, part of the ribosomal stalk of the 50S ribosomal subunit. Interacts with L10 and the large rRNA to form the base of the stalk. L10 forms an elongated spine to which L12 dimers bind in a sequential fashion forming a multimeric L10(L12)X complex. In terms of processing, one or more lysine residues are methylated.

Its function is as follows. Forms part of the ribosomal stalk which helps the ribosome interact with GTP-bound translation factors. This Thermus thermophilus (strain ATCC BAA-163 / DSM 7039 / HB27) protein is Large ribosomal subunit protein uL11.